Reading from the N-terminus, the 856-residue chain is Translation initiation factor IF-2 (856 aa).

Disordered stretches follow at residues 1-248 and 254-273; these read MSDN…ARAR and KRAR…QQKQ. The span at 22–38 shows a compositional bias: polar residues; that stretch reads ETGQVKQSFSHGRSNTV. Positions 83–93 are enriched in pro residues; the sequence is APRPAPAPIPT. The span at 100 to 150 shows a compositional bias: basic and acidic residues; sequence LERREQQERLLREAEEARMAALEETRRREERAKAEATEEERRRAEENRRAE. A compositionally biased stretch (low complexity) spans 156–196; that stretch reads AAAAAAAAATAEAETAAAAPREEAPAAAGTAEEAPRTSSST. A compositionally biased stretch (pro residues) spans 197–209; sequence MPPPRRFTPVPSP. Residues 210–229 show a composition bias toward basic and acidic residues; the sequence is KRPEPPRPQQRDRKGDDRRQ. Residues 356–526 enclose the tr-type G domain; sequence PRPPVVTIMG…ELQAELLELK (171 aa). The G1 stretch occupies residues 365–372; the sequence is GHVDHGKT. Residue 365–372 coordinates GTP; sequence GHVDHGKT. The segment at 390–394 is G2; the sequence is GITQH. The G3 stretch occupies residues 412–415; sequence DTPG. Residues 412 to 416 and 466 to 469 each bind GTP; these read DTPGH and NKMD. The tract at residues 466–469 is G4; it reads NKMD. The interval 502-504 is G5; the sequence is SAL.

The protein belongs to the TRAFAC class translation factor GTPase superfamily. Classic translation factor GTPase family. IF-2 subfamily.

The protein resides in the cytoplasm. Functionally, one of the essential components for the initiation of protein synthesis. Protects formylmethionyl-tRNA from spontaneous hydrolysis and promotes its binding to the 30S ribosomal subunits. Also involved in the hydrolysis of GTP during the formation of the 70S ribosomal complex. This is Translation initiation factor IF-2 from Rhizorhabdus wittichii (strain DSM 6014 / CCUG 31198 / JCM 15750 / NBRC 105917 / EY 4224 / RW1) (Sphingomonas wittichii).